The primary structure comprises 438 residues: MNFLGNPRSHTAAFLPVCWLLLNILKPGHCHSYDNRYAGDKVIRLIPKSEEEALALKNIYHQLKVDLWQPSSISYVSEGTITDVHISQNASRTLLAFLQETHIYYKVLIEDLQKAVENENSLQTQRNRRSLSEYNYEVYHSLEDIQSWLHHLNQTQPGLVRVFSIGRSYEGRPLFIMQLGRKSRAYKRAVWIDCGIHAREWIGPAFCQWFVREAILTYKTDPAMKKMLNHLYFYIMPVFNVDGYHFSWTHDRFWRKTRSRDSKFRCRGVDANRNWKVKWCDEGASAHPCDDTYCGPFPESEPEVKAVANFLRKHRKRIRAYLSFHAYAQMLLYPYSYKYATIPNFSCVEFAAHKAVKALRSVHGIRYRHGPASQTLYVSSGNSMDWAYKNGIPYAFAFELRDTGHFGFLLPEMLIKPTCTETMLAVKNITMHLLKKCP.

An N-terminal signal peptide occupies residues 1–30; that stretch reads MNFLGNPRSHTAAFLPVCWLLLNILKPGHC. A propeptide spans 31 to 129 (activation peptide); it reads HSYDNRYAGD…NSLQTQRNRR (99 aa). Asn89 and Asn153 each carry an N-linked (GlcNAc...) asparagine glycan. The Peptidase M14 domain maps to 138–433; sequence VYHSLEDIQS…LAVKNITMHL (296 aa). Positions 197 and 200 each coordinate Zn(2+). Residues 197 to 200, Arg255, and 272 to 273 contribute to the substrate site; these read HARE and NR. Residues Cys266 and Cys289 are joined by a disulfide bond. His325 is a Zn(2+) binding site. A substrate-binding site is contributed by 326–327; it reads AY. An N-linked (GlcNAc...) asparagine glycan is attached at Asn344. Tyr377 contributes to the substrate binding site. The active-site Proton donor/acceptor is the Glu399. N-linked (GlcNAc...) asparagine glycosylation is present at Asn428.

The protein belongs to the peptidase M14 family. The cofactor is Zn(2+). As to expression, in brain, highly expressed in the olfactory bulb with lower levels in other regions including cerebral cortex, hippocampus, hypothalamus, striatum and medulla. Within the olfactory bulb, highest levels occur in the mitral and granular layers with lower levels in the internal and external plexiform layers. Moderate levels are found in the epididymis with low levels in colon and spleen. Not detected in adrenal, liver, lung, ovary or testis. At embryonic day 14.5, enriched in eye, ear, osteoblasts, stomach, skin, dorsal root ganglia and throughout the CNS.

The protein resides in the secreted. The protein localises to the extracellular space. It localises to the extracellular matrix. Its function is as follows. May be involved in the proteolytic inactivation of enkephalins and neurotensin in some brain areas. May convert inactive angiotensin I into the biologically active angiotensin II. Releases a C-terminal amino acid, with preference for large hydrophobic C-terminal amino acids and shows only very weak activity toward small amino acids and histidine. The chain is Carboxypeptidase A6 (Cpa6) from Mus musculus (Mouse).